Here is a 460-residue protein sequence, read N- to C-terminus: Bifunctional protein GlmU (460 aa).

The tract at residues 1–233 is pyrophosphorylase; sequence MLDIVIMAAG…ETEVLGVNSP (233 aa). Residues Lys21, Gln76, and 81 to 82 each bind UDP-N-acetyl-alpha-D-glucosamine; that span reads GT. Asp105 lines the Mg(2+) pocket. UDP-N-acetyl-alpha-D-glucosamine-binding residues include Gly140, Glu158, and Asn231. Asn231 is a Mg(2+) binding site. The tract at residues 234–254 is linker; it reads LQLADLERRLQRKQAEALLEA. The segment at 255–460 is N-acetyltransferase; that stretch reads GVRLADPARF…AGWQRPQKKR (206 aa). UDP-N-acetyl-alpha-D-glucosamine-binding residues include Arg337 and Lys355. The active-site Proton acceptor is the His367. Positions 370 and 381 each coordinate UDP-N-acetyl-alpha-D-glucosamine. Residues Ala384, 390–391, Ser409, Gly427, and Arg444 contribute to the acetyl-CoA site; that span reads NY.

This sequence in the N-terminal section; belongs to the N-acetylglucosamine-1-phosphate uridyltransferase family. The protein in the C-terminal section; belongs to the transferase hexapeptide repeat family. In terms of assembly, homotrimer. Mg(2+) serves as cofactor.

The protein localises to the cytoplasm. It carries out the reaction alpha-D-glucosamine 1-phosphate + acetyl-CoA = N-acetyl-alpha-D-glucosamine 1-phosphate + CoA + H(+). The enzyme catalyses N-acetyl-alpha-D-glucosamine 1-phosphate + UTP + H(+) = UDP-N-acetyl-alpha-D-glucosamine + diphosphate. It functions in the pathway nucleotide-sugar biosynthesis; UDP-N-acetyl-alpha-D-glucosamine biosynthesis; N-acetyl-alpha-D-glucosamine 1-phosphate from alpha-D-glucosamine 6-phosphate (route II): step 2/2. The protein operates within nucleotide-sugar biosynthesis; UDP-N-acetyl-alpha-D-glucosamine biosynthesis; UDP-N-acetyl-alpha-D-glucosamine from N-acetyl-alpha-D-glucosamine 1-phosphate: step 1/1. It participates in bacterial outer membrane biogenesis; LPS lipid A biosynthesis. In terms of biological role, catalyzes the last two sequential reactions in the de novo biosynthetic pathway for UDP-N-acetylglucosamine (UDP-GlcNAc). The C-terminal domain catalyzes the transfer of acetyl group from acetyl coenzyme A to glucosamine-1-phosphate (GlcN-1-P) to produce N-acetylglucosamine-1-phosphate (GlcNAc-1-P), which is converted into UDP-GlcNAc by the transfer of uridine 5-monophosphate (from uridine 5-triphosphate), a reaction catalyzed by the N-terminal domain. In Methylibium petroleiphilum (strain ATCC BAA-1232 / LMG 22953 / PM1), this protein is Bifunctional protein GlmU.